A 389-amino-acid polypeptide reads, in one-letter code: 1-deoxy-D-xylulose 5-phosphate reductoisomerase (389 aa).

Residues Ser11, Gly12, Ser13, Val14, Asn39, and Asn122 each coordinate NADPH. Lys123 is a binding site for 1-deoxy-D-xylulose 5-phosphate. Glu124 lines the NADPH pocket. Asp148 contacts Mn(2+). Ser149, Glu150, Ser174, and His197 together coordinate 1-deoxy-D-xylulose 5-phosphate. Residue Glu150 coordinates Mn(2+). Gly203 serves as a coordination point for NADPH. 1-deoxy-D-xylulose 5-phosphate contacts are provided by Ser210, Asn215, Lys216, and Glu219. Glu219 serves as a coordination point for Mn(2+).

This sequence belongs to the DXR family. Mg(2+) serves as cofactor. Requires Mn(2+) as cofactor.

The enzyme catalyses 2-C-methyl-D-erythritol 4-phosphate + NADP(+) = 1-deoxy-D-xylulose 5-phosphate + NADPH + H(+). It participates in isoprenoid biosynthesis; isopentenyl diphosphate biosynthesis via DXP pathway; isopentenyl diphosphate from 1-deoxy-D-xylulose 5-phosphate: step 1/6. Catalyzes the NADPH-dependent rearrangement and reduction of 1-deoxy-D-xylulose-5-phosphate (DXP) to 2-C-methyl-D-erythritol 4-phosphate (MEP). The polypeptide is 1-deoxy-D-xylulose 5-phosphate reductoisomerase (Leptospira interrogans serogroup Icterohaemorrhagiae serovar copenhageni (strain Fiocruz L1-130)).